Consider the following 182-residue polypeptide: ATP synthase subunit delta (182 aa).

The protein belongs to the ATPase delta chain family. In terms of assembly, F-type ATPases have 2 components, F(1) - the catalytic core - and F(0) - the membrane proton channel. F(1) has five subunits: alpha(3), beta(3), gamma(1), delta(1), epsilon(1). F(0) has three main subunits: a(1), b(2) and c(10-14). The alpha and beta chains form an alternating ring which encloses part of the gamma chain. F(1) is attached to F(0) by a central stalk formed by the gamma and epsilon chains, while a peripheral stalk is formed by the delta and b chains.

The protein resides in the cell membrane. F(1)F(0) ATP synthase produces ATP from ADP in the presence of a proton or sodium gradient. F-type ATPases consist of two structural domains, F(1) containing the extramembraneous catalytic core and F(0) containing the membrane proton channel, linked together by a central stalk and a peripheral stalk. During catalysis, ATP synthesis in the catalytic domain of F(1) is coupled via a rotary mechanism of the central stalk subunits to proton translocation. Its function is as follows. This protein is part of the stalk that links CF(0) to CF(1). It either transmits conformational changes from CF(0) to CF(1) or is implicated in proton conduction. The sequence is that of ATP synthase subunit delta from Lactobacillus gasseri (strain ATCC 33323 / DSM 20243 / BCRC 14619 / CIP 102991 / JCM 1131 / KCTC 3163 / NCIMB 11718 / NCTC 13722 / AM63).